The following is a 353-amino-acid chain: Probable WRKY transcription factor 7 (353 aa).

Residues 117 to 259 form a disordered region; sequence VEEKKPETSS…SSRCHCSKKR (143 aa). Positions 158–176 are enriched in low complexity; that stretch reads SHNNNNNQNQTKNGSSSSS. Polar residues-rich tracts occupy residues 184–204 and 213–229; these read APSTINFAPSPPVSATNSFMS and THMSSGFEFTNPSQLSG. Residues 275–341 constitute a DNA-binding region (WRKY); sequence KMADIPSDEF…YEGDHNHALV (67 aa).

It belongs to the WRKY group II-d family. As to expression, in young, mature and senescent leaves.

It is found in the nucleus. Its function is as follows. Transcription factor. Interacts specifically with the W box (5'-(T)TGAC[CT]-3'), a frequently occurring elicitor-responsive cis-acting element. This is Probable WRKY transcription factor 7 (WRKY7) from Arabidopsis thaliana (Mouse-ear cress).